The primary structure comprises 233 residues: Probable tetraheme cytochrome c-type (233 aa).

Positions 1–28 are cleaved as a signal peptide; that stretch reads MTRLQKGSIGTLLTGALLGIVLVAVVFG. Residues cysteine 39, cysteine 42, methionine 45, cysteine 67, cysteine 70, histidine 71, glutamate 93, cysteine 131, cysteine 134, histidine 135, cysteine 159, cysteine 162, histidine 163, and histidine 168 each coordinate heme. A disordered region spans residues 182 to 233; that stretch reads QGKLVLKPEDDGDDEEADEDEDEETEEADDSSDSESASSSDNSDNEDDNNDE. Composition is skewed to acidic residues over residues 191-214 and 224-233; these read DDGDDEEADEDEDEETEEADDSSD and SDNEDDNNDE.

It belongs to the NapC/NirT/NrfH family. Post-translationally, binds 4 heme groups per subunit.

The protein localises to the periplasm. The protein is Probable tetraheme cytochrome c-type (cycX1) of Nitrosomonas europaea (strain ATCC 19718 / CIP 103999 / KCTC 2705 / NBRC 14298).